Consider the following 192-residue polypeptide: Probable nicotinate-nucleotide adenylyltransferase (192 aa).

The protein belongs to the NadD family.

It catalyses the reaction nicotinate beta-D-ribonucleotide + ATP + H(+) = deamido-NAD(+) + diphosphate. It participates in cofactor biosynthesis; NAD(+) biosynthesis; deamido-NAD(+) from nicotinate D-ribonucleotide: step 1/1. Catalyzes the reversible adenylation of nicotinate mononucleotide (NaMN) to nicotinic acid adenine dinucleotide (NaAD). The polypeptide is Probable nicotinate-nucleotide adenylyltransferase (Cytophaga hutchinsonii (strain ATCC 33406 / DSM 1761 / CIP 103989 / NBRC 15051 / NCIMB 9469 / D465)).